The chain runs to 95 residues: Small ribosomal subunit protein uS19 (95 aa).

This sequence belongs to the universal ribosomal protein uS19 family.

Protein S19 forms a complex with S13 that binds strongly to the 16S ribosomal RNA. In Clostridium kluyveri (strain NBRC 12016), this protein is Small ribosomal subunit protein uS19.